Reading from the N-terminus, the 485-residue chain is Glutamate--tRNA ligase (485 aa).

A 'HIGH' region motif is present at residues 12–22 (PSPTGYMHIGN). The 'KMSKS' region motif lies at 253–257 (KLSKR). Position 256 (Lys256) interacts with ATP.

It belongs to the class-I aminoacyl-tRNA synthetase family. Glutamate--tRNA ligase type 1 subfamily. As to quaternary structure, monomer.

The protein localises to the cytoplasm. It catalyses the reaction tRNA(Glu) + L-glutamate + ATP = L-glutamyl-tRNA(Glu) + AMP + diphosphate. Functionally, catalyzes the attachment of glutamate to tRNA(Glu) in a two-step reaction: glutamate is first activated by ATP to form Glu-AMP and then transferred to the acceptor end of tRNA(Glu). In Clostridium acetobutylicum (strain ATCC 824 / DSM 792 / JCM 1419 / IAM 19013 / LMG 5710 / NBRC 13948 / NRRL B-527 / VKM B-1787 / 2291 / W), this protein is Glutamate--tRNA ligase.